We begin with the raw amino-acid sequence, 159 residues long: Eukaryotic translation initiation factor 5A-1 (159 aa).

The span at 1–12 (MSDEEHHFESKA) shows a compositional bias: basic and acidic residues. The disordered stretch occupies residues 1-23 (MSDEEHHFESKADAGASKTYPQQ). At Lys-52 the chain carries Hypusine.

This sequence belongs to the eIF-5A family. In terms of processing, lys-52 undergoes hypusination, a unique post-translational modification that consists in the addition of a butylamino group from spermidine to lysine side chain, leading to the formation of the unusual amino acid hypusine. eIF-5As are the only known proteins to undergo this modification, which is essential for their function.

In terms of biological role, translation factor that promotes translation elongation and termination, particularly upon ribosome stalling at specific amino acid sequence contexts. Binds between the exit (E) and peptidyl (P) site of the ribosome and promotes rescue of stalled ribosome: specifically required for efficient translation of polyproline-containing peptides as well as other motifs that stall the ribosome. Acts as a ribosome quality control (RQC) cofactor by joining the RQC complex to facilitate peptidyl transfer during CAT tailing step. In Nicotiana plumbaginifolia (Leadwort-leaved tobacco), this protein is Eukaryotic translation initiation factor 5A-1 (EIF-5A1).